A 156-amino-acid chain; its full sequence is ATP synthase subunit b (156 aa).

The helical transmembrane segment at 7 to 27 (LIAQFVVFFILAGFTMKFVWP) threads the bilayer.

Belongs to the ATPase B chain family. F-type ATPases have 2 components, F(1) - the catalytic core - and F(0) - the membrane proton channel. F(1) has five subunits: alpha(3), beta(3), gamma(1), delta(1), epsilon(1). F(0) has three main subunits: a(1), b(2) and c(10-14). The alpha and beta chains form an alternating ring which encloses part of the gamma chain. F(1) is attached to F(0) by a central stalk formed by the gamma and epsilon chains, while a peripheral stalk is formed by the delta and b chains.

The protein resides in the cell inner membrane. In terms of biological role, f(1)F(0) ATP synthase produces ATP from ADP in the presence of a proton or sodium gradient. F-type ATPases consist of two structural domains, F(1) containing the extramembraneous catalytic core and F(0) containing the membrane proton channel, linked together by a central stalk and a peripheral stalk. During catalysis, ATP synthesis in the catalytic domain of F(1) is coupled via a rotary mechanism of the central stalk subunits to proton translocation. Component of the F(0) channel, it forms part of the peripheral stalk, linking F(1) to F(0). In Herminiimonas arsenicoxydans, this protein is ATP synthase subunit b.